A 269-amino-acid chain; its full sequence is Leucinostatins biosynthesis cluster protein T (269 aa).

Positions 1–15 are cleaved as a signal peptide; sequence MHIILTGTGLVGAIA. Residue N254 is glycosylated (N-linked (GlcNAc...) asparagine).

Part of the gene cluster that mediates the biosynthesis of the lipopeptide antibiotics leucinostatins that show extensive biological activities, including antimalarial, antiviral, antibacterial, antifungal, and antitumor activities, as well as phytotoxic. The function of lcsT within the leucinostatins biosynthesis has not been identified yet. This is Leucinostatins biosynthesis cluster protein T from Purpureocillium lilacinum (Paecilomyces lilacinus).